The chain runs to 269 residues: Aquaporin-1 (269 aa).

Topologically, residues 2 to 11 (ASEFKKKLFW) are cytoplasmic. Residues 12–29 (RAVVAEFLATTLFVFISI) form a helical membrane-spanning segment. Residues 30–46 (GSALGFKYPVGNNQTAV) are Extracellular-facing. Residue Asn-42 is glycosylated (N-linked (GlcNAc...) asparagine). Residues 47–65 (QDNVKVSLAFGLSIATLAQ) form a helical membrane-spanning segment. The Cytoplasmic portion of the chain corresponds to 66–68 (SVG). The stretch at 69-82 (HISGAHLNPAVTLG) is an intramembrane region. The short motif at 76–78 (NPA) is the NPA 1 element. The Cytoplasmic segment spans residues 83 to 90 (LLLSCQIS). A helical membrane pass occupies residues 91–109 (IFRALMYIIAQCVGAIVAT). The Extracellular segment spans residues 110–133 (AILSGITSSLTGNSLGRNDLADGV). The chain crosses the membrane as a helical span at residues 134–153 (NSGQGLGIEIIGTLQLVLCV). Residues 154–163 (LATTDRRRRD) lie on the Cytoplasmic side of the membrane. The helical transmembrane segment at 164–181 (LGGSAPLAIGLSVALGHL) threads the bilayer. Residues 182-186 (LAIDY) are Extracellular-facing. The stretch at 187 to 199 (TGCGINPARSFGS) is an intramembrane region. The NPA 2 signature appears at 192-194 (NPA). Over 200–206 (AVITHNF) the chain is Extracellular. Residue Asn-205 is glycosylated (N-linked (GlcNAc...) asparagine). The chain crosses the membrane as a helical span at residues 207 to 224 (SNHWIFWVGPFIGGALAV). Residues 225-269 (LIYDFILAPRSSDLTDRVKVWTSGQVEEYDLDADDINSRVEMKPK) lie on the Cytoplasmic side of the membrane. The residue at position 247 (Ser-247) is a Phosphoserine. Tyr-253 is modified (phosphotyrosine). The residue at position 262 (Ser-262) is a Phosphoserine.

It belongs to the MIP/aquaporin (TC 1.A.8) family. Homotetramer; each monomer provides an independent water pore. Component of the ankyrin-1 complex in the erythrocyte, composed of ANK1, RHCE, RHAG, SLC4A1, EPB42, GYPA, GYPB and AQP1. Interacts with EPHB2; involved in endolymph production in the inner ear. Identified in a complex with STOM. Interacts (via the N-terminal) with ANK1 (via ANK 1-5 repeats). Interacts (via the C-terminal) with EPB42. Detected in erythrocytes (at protein level). Expressed in a number of tissues including erythrocytes, renal tubules, retinal pigment epithelium, heart, lung, skeletal muscle, kidney and pancreas. Weakly expressed in brain, placenta and liver.

The protein resides in the cell membrane. It carries out the reaction H2O(in) = H2O(out). The enzyme catalyses nitric oxide(out) = nitric oxide(in). The catalysed reaction is CO2(out) = CO2(in). It catalyses the reaction glycerol(in) = glycerol(out). It carries out the reaction H2O2(out) = H2O2(in). The enzyme catalyses K(+)(in) = K(+)(out). The catalysed reaction is Na(+)(in) = Na(+)(out). Its activity is regulated as follows. The water channel activity is inhibited by P-choloromercuribenzene sulphonate and diethylpyrocarbonate(DPPC). The glycerol channel activity is inhibited by P-choloromercuribenzene sulphonate, diethylpyrocarbonate(DPPC), phloretin and Cu(2+). Inhibited by mercury. Forms a water channel that facilitates the transport of water across cell membranes, playing a crucial role in water homeostasis in various tissues. Could also be permeable to small solutes including hydrogen peroxide, glycerol and gases such as amonnia (NH3), nitric oxide (NO) and carbon dioxide (CO2). Recruited to the ankyrin-1 complex, a multiprotein complex of the erythrocyte membrane, it could be part of a CO2 metabolon, linking facilitated diffusion of CO2 across the membrane, anion exchange of Cl(-)/HCO3(-) and interconversion of dissolved CO2 and carbonic acid in the cytosol. In vitro, it shows non-selective gated cation channel activity and may be permeable to cations like K(+) and Na(+) in vivo. The sequence is that of Aquaporin-1 from Homo sapiens (Human).